Here is a 631-residue protein sequence, read N- to C-terminus: Mercuric reductase (631 aa).

HMA domains follow at residues 2-66 (KKYR…YHPG) and 81-145 (KKYR…YQPG). Residues Cys13, Cys16, Cys92, and Cys95 each contribute to the a metal cation site. 3 residues coordinate FAD: Ala181, Gly201, and Thr206. The cysteines at positions 207 and 212 are disulfide-linked. FAD is bound by residues Lys216, Asp472, and Val480. Hg(2+)-binding residues include Cys628 and Cys629.

The protein belongs to the class-I pyridine nucleotide-disulfide oxidoreductase family. Homodimer. The cofactor is FAD.

The catalysed reaction is Hg + NADP(+) + H(+) = Hg(2+) + NADPH. Its function is as follows. Resistance to Hg(2+) in bacteria appears to be governed by a specialized system which includes mercuric reductase. MerA protein is responsible for volatilizing mercury as Hg(0). The sequence is that of Mercuric reductase (merA) from Bacillus cereus.